A 97-amino-acid chain; its full sequence is UPF0235 protein LHK_03181 (97 aa).

This sequence belongs to the UPF0235 family.

This is UPF0235 protein LHK_03181 from Laribacter hongkongensis (strain HLHK9).